Consider the following 345-residue polypeptide: Phosphate acyltransferase (345 aa).

Belongs to the PlsX family. As to quaternary structure, homodimer. Probably interacts with PlsY.

Its subcellular location is the cytoplasm. The catalysed reaction is a fatty acyl-[ACP] + phosphate = an acyl phosphate + holo-[ACP]. It functions in the pathway lipid metabolism; phospholipid metabolism. In terms of biological role, catalyzes the reversible formation of acyl-phosphate (acyl-PO(4)) from acyl-[acyl-carrier-protein] (acyl-ACP). This enzyme utilizes acyl-ACP as fatty acyl donor, but not acyl-CoA. The chain is Phosphate acyltransferase from Wolbachia sp. subsp. Brugia malayi (strain TRS).